The following is a 454-amino-acid chain: Bifunctional protein GlmU (454 aa).

The segment at 1-226 is pyrophosphorylase; sequence MSTTVIILAA…AFEVEGVNDR (226 aa). Residues 8–11, K22, Q73, 78–79, 100–102, G137, E151, N166, and N224 each bind UDP-N-acetyl-alpha-D-glucosamine; these read LAAG, GT, and YGD. D102 is a Mg(2+) binding site. N224 is a Mg(2+) binding site. The linker stretch occupies residues 227–247; that stretch reads LQLAALEREFQKQQAKELMQQ. The segment at 248–454 is N-acetyltransferase; sequence GVTFADPARF…NYQRPQKLKK (207 aa). R330 and K348 together coordinate UDP-N-acetyl-alpha-D-glucosamine. The active-site Proton acceptor is H360. Positions 363 and 374 each coordinate UDP-N-acetyl-alpha-D-glucosamine. Acetyl-CoA-binding positions include A377, 383-384, S402, A420, and R437; that span reads NY.

The protein in the N-terminal section; belongs to the N-acetylglucosamine-1-phosphate uridyltransferase family. It in the C-terminal section; belongs to the transferase hexapeptide repeat family. As to quaternary structure, homotrimer. Requires Mg(2+) as cofactor.

It is found in the cytoplasm. It carries out the reaction alpha-D-glucosamine 1-phosphate + acetyl-CoA = N-acetyl-alpha-D-glucosamine 1-phosphate + CoA + H(+). The catalysed reaction is N-acetyl-alpha-D-glucosamine 1-phosphate + UTP + H(+) = UDP-N-acetyl-alpha-D-glucosamine + diphosphate. It functions in the pathway nucleotide-sugar biosynthesis; UDP-N-acetyl-alpha-D-glucosamine biosynthesis; N-acetyl-alpha-D-glucosamine 1-phosphate from alpha-D-glucosamine 6-phosphate (route II): step 2/2. It participates in nucleotide-sugar biosynthesis; UDP-N-acetyl-alpha-D-glucosamine biosynthesis; UDP-N-acetyl-alpha-D-glucosamine from N-acetyl-alpha-D-glucosamine 1-phosphate: step 1/1. Its pathway is bacterial outer membrane biogenesis; LPS lipid A biosynthesis. In terms of biological role, catalyzes the last two sequential reactions in the de novo biosynthetic pathway for UDP-N-acetylglucosamine (UDP-GlcNAc). The C-terminal domain catalyzes the transfer of acetyl group from acetyl coenzyme A to glucosamine-1-phosphate (GlcN-1-P) to produce N-acetylglucosamine-1-phosphate (GlcNAc-1-P), which is converted into UDP-GlcNAc by the transfer of uridine 5-monophosphate (from uridine 5-triphosphate), a reaction catalyzed by the N-terminal domain. In Acinetobacter baumannii (strain AYE), this protein is Bifunctional protein GlmU.